We begin with the raw amino-acid sequence, 242 residues long: Probable transcriptional regulatory protein BURPS1710b_1385 (242 aa).

It belongs to the TACO1 family.

It localises to the cytoplasm. This Burkholderia pseudomallei (strain 1710b) protein is Probable transcriptional regulatory protein BURPS1710b_1385.